The chain runs to 482 residues: Aspartic proteinase 36 (482 aa).

Residues 1 to 27 (MVTTMDPSRISRIVAVVFVLVIQVVSG) form the signal peptide. The N-linked (GlcNAc...) asparagine glycan is linked to asparagine 32. In terms of domain architecture, Peptidase A1 spans 78-429 (YFTKIKLGSP…DLENEVIGWA (352 aa)). The active site involves aspartate 96. N-linked (GlcNAc...) asparagine glycosylation is found at asparagine 178, asparagine 204, and asparagine 226. Residue aspartate 310 is part of the active site. The cysteines at positions 347 and 388 are disulfide-linked. The N-linked (GlcNAc...) asparagine glycan is linked to asparagine 432. Serine 456 carries GPI-anchor amidated serine lipidation. A propeptide spans 457 to 482 (AASSVMNGTLVTLLSILIWVFHSFTS) (removed in mature form). Asparagine 463 carries an N-linked (GlcNAc...) asparagine glycan.

This sequence belongs to the peptidase A1 family. Highly expressed in pollen and pollen tubes. Mostly expressed in roots, flowers and inflorescence, and at lower levels in stems, seedlings and siliques.

The protein localises to the cell membrane. Its subcellular location is the cytoplasm. The protein resides in the cytosol. Functionally, displays aspartic proteolytic activity. Together with A39, contributes to pollen and ovule development, including the apical cell wall constitution of the growing pollen tubes. The protein is Aspartic proteinase 36 of Arabidopsis thaliana (Mouse-ear cress).